We begin with the raw amino-acid sequence, 148 residues long: Probable DNA-directed RNA polymerases I, II, and III subunit RPABC3 (148 aa).

Residues 16–40 (DPDGKKFDRVSRYFCDAESFKMELI) form a non-specific ssDNA binding region.

The protein belongs to the eukaryotic RPB8 RNA polymerase subunit family. Component of the RNA polymerase I (Pol I), RNA polymerase II (Pol II) and RNA polymerase III (Pol III) complexes consisting of at least 13, 12 and 17 subunits, respectively. Directly interacts with POLR2A.

Its subcellular location is the nucleus. Its function is as follows. DNA-dependent RNA polymerase catalyzes the transcription of DNA into RNA using the four ribonucleoside triphosphates as substrates. Common component of RNA polymerases I, II and III which synthesize ribosomal RNA precursors, mRNA precursors and many functional non-coding RNAs, and small RNAs, such as 5S rRNA and tRNAs, respectively. The protein is Probable DNA-directed RNA polymerases I, II, and III subunit RPABC3 of Caenorhabditis briggsae.